We begin with the raw amino-acid sequence, 248 residues long: Small ribosomal subunit protein uS3 (248 aa).

The KH type-2 domain maps to 39–108 (IRKLVDKKLS…TVAVNVAEIP (70 aa)). Positions 214–248 (ETIARPQRRNDERRPEGGDRANRRRPTARRRAGGE) are disordered. The segment covering 221–234 (RRNDERRPEGGDRA) has biased composition (basic and acidic residues). The span at 235 to 248 (NRRRPTARRRAGGE) shows a compositional bias: basic residues.

The protein belongs to the universal ribosomal protein uS3 family. As to quaternary structure, part of the 30S ribosomal subunit. Forms a tight complex with proteins S10 and S14.

Functionally, binds the lower part of the 30S subunit head. Binds mRNA in the 70S ribosome, positioning it for translation. The chain is Small ribosomal subunit protein uS3 from Deinococcus deserti (strain DSM 17065 / CIP 109153 / LMG 22923 / VCD115).